A 150-amino-acid polypeptide reads, in one-letter code: Transcriptional repressor NrdR (150 aa).

A zinc finger spans residues 3 to 34; that stretch reads CPFCGYEDTFVIDTREIEDQKVIRRRRECPNC. The region spanning 49–139 is the ATP-cone domain; the sequence is IMVIKKDGRR…VYQEFSSLEE (91 aa).

It belongs to the NrdR family. Zn(2+) serves as cofactor.

Negatively regulates transcription of bacterial ribonucleotide reductase nrd genes and operons by binding to NrdR-boxes. This Dictyoglomus turgidum (strain DSM 6724 / Z-1310) protein is Transcriptional repressor NrdR.